The following is a 398-amino-acid chain: Type III polyketide synthase pspB (398 aa).

CoA contacts are provided by residues Lys-47 and 47-54 (KLLQINRS). Cys-152 functions as the Nucleophile in the catalytic mechanism. 214 to 215 (SD) is a substrate binding site. Residues Leu-267, Gly-321, 321–324 (GGEA), and Ala-324 each bind CoA.

Belongs to the thiolase-like superfamily. Chalcone/stilbene synthases family. Homodimer.

It carries out the reaction 11 malonyl-CoA + acetyl-CoA + S-adenosyl-L-methionine + 12 NADPH + 22 H(+) = soppiline B + S-adenosyl-L-homocysteine + 12 CO2 + 12 NADP(+) + 12 CoA + 8 H2O. It participates in secondary metabolite biosynthesis. Its function is as follows. Type III polyketide synthase; part of the gene cluster that mediates the biosynthesis of the alkylresorcinols called soppilines. The biosynthesis starts with the HR-PKS pspA-catalyzed carbon chain assembly through nine chain elongation cycles, using acetyl CoA and malonyl CoA as a starter and extender units, respectively, to produce the polyketide soppiline A. In the first round, the KR, DH, and CMeT domains work to produce 2-methyl-2-butenyl thioester. In rounds 2 to 5, the KR, DH, and ER domains fully catalyze the reduction of the elongated beta-ketothioester, resulting in the insertion of eight methylene units. The unusual Z,E,Z-triene motif is likely constructed during rounds 6 to 8. Typically, the DH domain introduces a double bond at an alpha,beta-position of an elongated polyketide chain, with the dehydration of a beta-hydroxy group. The last extension cycle would be carried out with L-oriented beta-ketoreduction by the KR domain to produce beta-hydroxy carboxylic acid soppiline A. The type III PKS pspB intercepts the elongated polyketide chain at round 8 from the HR-PKS pspA, followed by a tri-keto extension and decarboxylative aldol cyclization to produce 1,3,5-trisubstituted alkylresorcinol soppiline B. Subsequently, the cytochrome P450 monooxygenase pspC catalyzes three-step oxidations at the C-4 methyl group to carboxylic acid to yield soppiline C. This chain is Type III polyketide synthase pspB, found in Penicillium soppii.